Here is a 121-residue protein sequence, read N- to C-terminus: Large ribosomal subunit protein uL18 (121 aa).

This sequence belongs to the universal ribosomal protein uL18 family. As to quaternary structure, part of the 50S ribosomal subunit; part of the 5S rRNA/L5/L18/L25 subcomplex. Contacts the 5S and 23S rRNAs.

This is one of the proteins that bind and probably mediate the attachment of the 5S RNA into the large ribosomal subunit, where it forms part of the central protuberance. This is Large ribosomal subunit protein uL18 from Burkholderia multivorans (strain ATCC 17616 / 249).